Consider the following 318-residue polypeptide: MKLDFLDFEQPIAELEAKIDELRHLDGQDMDLIKEVSALEQKSKNLTQSIFNRLSDVQVAQVARHPQRPYMLDYLKEMFTDFKEMHGDRAFADDAAIVGGLARINGQAVMVIGQEKGRDTKEKIRRNFGMPRPEGYRKALRLMKTAETFGLPVLTFIDTPGAYPGINAEERGQSEAIARNLIEMSELKVPVICTVIGEGGSGGALAIGVGDVTMMMQYSTYSVISPEGCASILWKDAANAADAASALGITAPRLKELGLVDEIVEEPLGGAHRNPSAAASSLKDAILRQLELLKNKPVDELLETRYQRYMQYGNFDVA.

Positions 31–292 constitute a CoA carboxyltransferase C-terminal domain; that stretch reads DLIKEVSALE…KDAILRQLEL (262 aa).

This sequence belongs to the AccA family. In terms of assembly, acetyl-CoA carboxylase is a heterohexamer composed of biotin carboxyl carrier protein (AccB), biotin carboxylase (AccC) and two subunits each of ACCase subunit alpha (AccA) and ACCase subunit beta (AccD).

Its subcellular location is the cytoplasm. It carries out the reaction N(6)-carboxybiotinyl-L-lysyl-[protein] + acetyl-CoA = N(6)-biotinyl-L-lysyl-[protein] + malonyl-CoA. It participates in lipid metabolism; malonyl-CoA biosynthesis; malonyl-CoA from acetyl-CoA: step 1/1. In terms of biological role, component of the acetyl coenzyme A carboxylase (ACC) complex. First, biotin carboxylase catalyzes the carboxylation of biotin on its carrier protein (BCCP) and then the CO(2) group is transferred by the carboxyltransferase to acetyl-CoA to form malonyl-CoA. This chain is Acetyl-coenzyme A carboxylase carboxyl transferase subunit alpha, found in Hydrogenovibrio crunogenus (strain DSM 25203 / XCL-2) (Thiomicrospira crunogena).